Reading from the N-terminus, the 399-residue chain is MAIDIKAPTFPESIADGTVATWHKKPGEPVKRDELIVDIETDKVVMEVLAEADGVIAEIVKNEGDTVLSGELLGKLTEGGAATAAPAAAPAPAAAAPAAAEAPILSPAARKIAEENAIAADSITGTGKGGRVTKEDAVAAAEAKKSAPAGQPAPAATAAPLFAAGDRVEKRVPMTRLRAKVAERLVEAQSSMAMLTTFNEVNMKPVMELRAKYKDLFEKTHNGVRLGFMSFFVKAAVEALKRQPGVNASIDGNDIVYHGYQDIGVAVSSDRGLVVPVLRNAEFMSLAEIEGGINEFGKKAKAGKLTIEEMTGGTFTISNGGVFGSLLSTPIVNPPQTAILGMHKIQERPMAVNGQVVILPMMYLALSYDHRLIDGKEAVTFLVTMKDLLEDPARLLLDV.

In terms of domain architecture, Lipoyl-binding spans Ala-2 to Thr-77. Lys-43 carries the N6-lipoyllysine modification. A Peripheral subunit-binding (PSBD) domain is found at Ile-104–Ala-141. Catalysis depends on residues His-370 and Asp-374.

Belongs to the 2-oxoacid dehydrogenase family. As to quaternary structure, forms a 24-polypeptide structural core with octahedral symmetry. Part of the 2-oxoglutarate dehydrogenase (OGDH) complex composed of E1 (2-oxoglutarate dehydrogenase), E2 (dihydrolipoamide succinyltransferase) and E3 (dihydrolipoamide dehydrogenase); the complex contains multiple copies of the three enzymatic components (E1, E2 and E3). It depends on (R)-lipoate as a cofactor.

It catalyses the reaction N(6)-[(R)-dihydrolipoyl]-L-lysyl-[protein] + succinyl-CoA = N(6)-[(R)-S(8)-succinyldihydrolipoyl]-L-lysyl-[protein] + CoA. It functions in the pathway amino-acid degradation; L-lysine degradation via saccharopine pathway; glutaryl-CoA from L-lysine: step 6/6. Functionally, E2 component of the 2-oxoglutarate dehydrogenase (OGDH) complex which catalyzes the second step in the conversion of 2-oxoglutarate to succinyl-CoA and CO(2). This chain is Dihydrolipoyllysine-residue succinyltransferase component of 2-oxoglutarate dehydrogenase complex (sucB), found in Azotobacter vinelandii.